The following is a 339-amino-acid chain: Small ribosomal subunit biogenesis GTPase RsgA (339 aa).

Residues methionine 111 to phenylalanine 271 form the CP-type G domain. GTP-binding positions include asparagine 159–aspartate 162 and glycine 213–serine 221. The Zn(2+) site is built by cysteine 295, cysteine 300, histidine 302, and cysteine 308.

It belongs to the TRAFAC class YlqF/YawG GTPase family. RsgA subfamily. Monomer. Associates with 30S ribosomal subunit, binds 16S rRNA. The cofactor is Zn(2+).

It is found in the cytoplasm. In terms of biological role, one of several proteins that assist in the late maturation steps of the functional core of the 30S ribosomal subunit. Helps release RbfA from mature subunits. May play a role in the assembly of ribosomal proteins into the subunit. Circularly permuted GTPase that catalyzes slow GTP hydrolysis, GTPase activity is stimulated by the 30S ribosomal subunit. In Pseudomonas aeruginosa (strain UCBPP-PA14), this protein is Small ribosomal subunit biogenesis GTPase RsgA.